Reading from the N-terminus, the 156-residue chain is Small ribosomal subunit protein uS7 (156 aa).

The protein belongs to the universal ribosomal protein uS7 family. As to quaternary structure, part of the 30S ribosomal subunit. Contacts proteins S9 and S11.

Its function is as follows. One of the primary rRNA binding proteins, it binds directly to 16S rRNA where it nucleates assembly of the head domain of the 30S subunit. Is located at the subunit interface close to the decoding center, probably blocks exit of the E-site tRNA. This is Small ribosomal subunit protein uS7 from Synechococcus elongatus (strain ATCC 33912 / PCC 7942 / FACHB-805) (Anacystis nidulans R2).